We begin with the raw amino-acid sequence, 344 residues long: Glyceraldehyde-3-phosphate dehydrogenase (344 aa).

Residues 11 to 12 (TI) and Gly110 each bind NAD(+). A D-glyceraldehyde 3-phosphate-binding site is contributed by 139–141 (SCN). Cys140 serves as the catalytic Nucleophile. Residue Arg169 participates in NAD(+) binding. D-glyceraldehyde 3-phosphate is bound at residue 195 to 196 (HG). Gln302 contributes to the NAD(+) binding site.

The protein belongs to the glyceraldehyde-3-phosphate dehydrogenase family. Homotetramer.

The protein resides in the cytoplasm. The enzyme catalyses D-glyceraldehyde 3-phosphate + phosphate + NADP(+) = (2R)-3-phospho-glyceroyl phosphate + NADPH + H(+). It catalyses the reaction D-glyceraldehyde 3-phosphate + phosphate + NAD(+) = (2R)-3-phospho-glyceroyl phosphate + NADH + H(+). It functions in the pathway carbohydrate degradation; glycolysis; pyruvate from D-glyceraldehyde 3-phosphate: step 1/5. The polypeptide is Glyceraldehyde-3-phosphate dehydrogenase (Pyrobaculum arsenaticum (strain DSM 13514 / JCM 11321 / PZ6)).